Here is a 214-residue protein sequence, read N- to C-terminus: Orotate phosphoribosyltransferase (214 aa).

Residue Lys-26 participates in 5-phospho-alpha-D-ribose 1-diphosphate binding. Orotate is bound at residue 34–35 (FF). Residues 72 to 73 (YK), Arg-99, Lys-100, Lys-103, His-105, and 124 to 132 (DDVITAGTA) each bind 5-phospho-alpha-D-ribose 1-diphosphate. Orotate-binding residues include Thr-128 and Arg-156.

The protein belongs to the purine/pyrimidine phosphoribosyltransferase family. PyrE subfamily. As to quaternary structure, homodimer. Mg(2+) serves as cofactor.

The catalysed reaction is orotidine 5'-phosphate + diphosphate = orotate + 5-phospho-alpha-D-ribose 1-diphosphate. It participates in pyrimidine metabolism; UMP biosynthesis via de novo pathway; UMP from orotate: step 1/2. Its function is as follows. Catalyzes the transfer of a ribosyl phosphate group from 5-phosphoribose 1-diphosphate to orotate, leading to the formation of orotidine monophosphate (OMP). The chain is Orotate phosphoribosyltransferase from Actinobacillus succinogenes (strain ATCC 55618 / DSM 22257 / CCUG 43843 / 130Z).